Consider the following 151-residue polypeptide: Ribosome maturation factor RimP (151 aa).

The protein belongs to the RimP family.

The protein resides in the cytoplasm. Its function is as follows. Required for maturation of 30S ribosomal subunits. The protein is Ribosome maturation factor RimP of Aliivibrio fischeri (strain MJ11) (Vibrio fischeri).